Here is a 309-residue protein sequence, read N- to C-terminus: MTATNHPKLFKRPVDGVLLLDKPGGMTSNEALQRVKRLFHAKKAGHTGSLDPLATGLLPICLGEATKFSQFLLGADKSYSVKGRLGVRTASGDSESPILTERPIPKLTKRALEKTLSAFRGVIDQTPSMYSALKHKGQPLYKLARQGIEVERKTRQVTIYELTLLDWDNESIELYVHCSKGTYIRTLLDDVGEALGCGAHVVALRRLRVAHYHEDQMIKLAHLEREYDKANYTGLDRYLLPLETMVSHFPAIKLSSSTAFYLQQGQAVMVPNAPTHGFVRLRDQNDQFIGIGEILSDARIAPRRLIQKR.

Aspartate 51 (nucleophile) is an active-site residue.

The protein belongs to the pseudouridine synthase TruB family. Type 1 subfamily.

It catalyses the reaction uridine(55) in tRNA = pseudouridine(55) in tRNA. Its function is as follows. Responsible for synthesis of pseudouridine from uracil-55 in the psi GC loop of transfer RNAs. The polypeptide is tRNA pseudouridine synthase B (Coxiella burnetii (strain Dugway 5J108-111)).